Reading from the N-terminus, the 649-residue chain is Phosphomethylpyrimidine synthase (649 aa).

Substrate-binding positions include Asn-235, Met-264, Tyr-293, His-329, 349–351 (SRG), 390–393 (DGLR), and Glu-429. His-433 serves as a coordination point for Zn(2+). Tyr-456 lines the substrate pocket. A Zn(2+)-binding site is contributed by His-497. [4Fe-4S] cluster is bound by residues Cys-577, Cys-580, and Cys-585. Residues 620–649 (GMRQKSQEFRDTGSELYHPAVGAKEAQLEE) form a disordered region. Over residues 621–632 (MRQKSQEFRDTG) the composition is skewed to basic and acidic residues.

Belongs to the ThiC family. As to quaternary structure, homodimer. It depends on [4Fe-4S] cluster as a cofactor.

It carries out the reaction 5-amino-1-(5-phospho-beta-D-ribosyl)imidazole + S-adenosyl-L-methionine = 4-amino-2-methyl-5-(phosphooxymethyl)pyrimidine + CO + 5'-deoxyadenosine + formate + L-methionine + 3 H(+). It functions in the pathway cofactor biosynthesis; thiamine diphosphate biosynthesis. Functionally, catalyzes the synthesis of the hydroxymethylpyrimidine phosphate (HMP-P) moiety of thiamine from aminoimidazole ribotide (AIR) in a radical S-adenosyl-L-methionine (SAM)-dependent reaction. The sequence is that of Phosphomethylpyrimidine synthase from Vibrio atlanticus (strain LGP32) (Vibrio splendidus (strain Mel32)).